We begin with the raw amino-acid sequence, 162 residues long: NADH-quinone oxidoreductase subunit I (162 aa).

4Fe-4S ferredoxin-type domains lie at 53-83 and 93-122; these read LRRY…IESE and TRYD…ETRV. [4Fe-4S] cluster contacts are provided by Cys63, Cys66, Cys69, Cys73, Cys102, Cys105, Cys108, and Cys112.

The protein belongs to the complex I 23 kDa subunit family. NDH-1 is composed of 14 different subunits. Subunits NuoA, H, J, K, L, M, N constitute the membrane sector of the complex. It depends on [4Fe-4S] cluster as a cofactor.

The protein resides in the cell inner membrane. It carries out the reaction a quinone + NADH + 5 H(+)(in) = a quinol + NAD(+) + 4 H(+)(out). In terms of biological role, NDH-1 shuttles electrons from NADH, via FMN and iron-sulfur (Fe-S) centers, to quinones in the respiratory chain. The immediate electron acceptor for the enzyme in this species is believed to be ubiquinone. Couples the redox reaction to proton translocation (for every two electrons transferred, four hydrogen ions are translocated across the cytoplasmic membrane), and thus conserves the redox energy in a proton gradient. The polypeptide is NADH-quinone oxidoreductase subunit I (Nitrosomonas eutropha (strain DSM 101675 / C91 / Nm57)).